The chain runs to 706 residues: Polyribonucleotide nucleotidyltransferase (706 aa).

Mg(2+)-binding residues include aspartate 490 and aspartate 496. In terms of domain architecture, KH spans 556–615; sequence PRIETMQIPTDKIREVIGSGGKVIREIVEVSGAKVDINDEGIIKIASPNGDSIQKAYDMI. The S1 motif domain maps to 625 to 693; it reads GKIYKGKVVK…DRGKVRLAMK (69 aa).

It belongs to the polyribonucleotide nucleotidyltransferase family. The cofactor is Mg(2+).

It is found in the cytoplasm. It catalyses the reaction RNA(n+1) + phosphate = RNA(n) + a ribonucleoside 5'-diphosphate. Its function is as follows. Involved in mRNA degradation. Catalyzes the phosphorolysis of single-stranded polyribonucleotides processively in the 3'- to 5'-direction. The chain is Polyribonucleotide nucleotidyltransferase from Jannaschia sp. (strain CCS1).